The primary structure comprises 350 residues: MPVSNAQLTQMFEHVLKLSRVDETQSVAVLKSHYSDPRTVNAAMEAAQRLKAKVYAVELPAFNHPTAMGNDMTAYCGDTALTGNLAAQRALEAADLVVDTMMLLHSPEQEQILKTGTRILLAVEPPEVLARMLPTEDDKRRVLAAETLLKQARSLHVRSKAGSDFHAPLGQYPAVTEYGYADEPGRWDHWPSGFLFTWPNEDSAEGTLVLDVGDIILPFKNYCRERITLEIEKGFITGIHGGFEAEYLRDYMKYFNDPEVYGISHIGWGLQPRAQWTAMGLHDRNDGMCMDARAFYGNFLFSTGPNTEVGGKRKTPCHLDIPLRNCDIYLDDKAVVLAGDVVAPEESRAR.

Fe cation-binding residues include His265, His318, and Asp320.

Requires Fe(2+) as cofactor.

It catalyses the reaction 2,5-dihydroxypyridine + O2 = N-formylmaleamate + H(+). It participates in cofactor degradation; nicotinate degradation. Its function is as follows. Catalyzes the dioxygenolytic ring cleavage of 2,5-dihydroxypyridine between carbons 5 and 6 generating N-formylmaleamate in the aerobic nicotinate degradation pathway. The protein is 2,5-dihydroxypyridine 5,6-dioxygenase (nicX) of Pseudomonas putida (strain ATCC 47054 / DSM 6125 / CFBP 8728 / NCIMB 11950 / KT2440).